The chain runs to 613 residues: MEASKQMRVSRPYKISESSKVYHWPDHSTAVLQRLNEQRLHGLFCDVVLVVEEQQVPAHRNLLAVCSDYFNSMFTLGMREAFQKEVELVGTSYVGLKAVVDFLYSSELELDGSNIDYILETAHLLQIWTVVDFCCEYLEQEVSEDNYLYLQELASIYSLKRLDAFIDSFVLSHFSTLSFTPDFLQSISVQKLCVYLSSGQVQHKWEYDLLQVALQWLTQQPEREVHTRRVLENIRFPLFPEDILLQRVKLAMCSLLPSEANGEGFVEEAMHYHNSLVAQPVLQTKRTLLRSEECLLFVGGEVSERCLELSDDTCYLDTKNEQWVKETSLPARRSHHCVAVLGGFIFIAGGSFSRDNGGNAASNLLYRYDPRRKQWIKVASMNQRRVDFYLASIEDMLVAVGGRNENGALSSVETYSPKTNSWTYVAGLPRFTYGHAGTIYKDFVYISGGHDYQIGPYRKNLLCYDHRTDVWEERRPMTTARGWHSMCSLGDSIYSIGGSDDHMESMERFDVLGVEAYSPQCNQWTRVAPLLQANSESGVAVWQGRIYILGGYSWESTAFSRAVQVYDSEANRWSRGPDLPNAIAGVSACVCALNPRLEEKKKRNKDKCQDRGQ.

The 68-residue stretch at 45-112 (CDVVLVVEEQ…LYSSELELDG (68 aa)) folds into the BTB domain. The region spanning 147-249 (YLYLQELASI…PEDILLQRVK (103 aa)) is the BACK domain. 6 Kelch repeats span residues 294–343 (CLLF…VLGG), 344–395 (FIFI…SIED), 396–442 (MLVA…IYKD), 444–491 (VYIS…SLGD), 492–544 (SIYS…VWQG), and 545–593 (RIYI…VCAL).

In terms of assembly, interacts with CUL3.

It functions in the pathway protein modification; protein ubiquitination. Functionally, probable substrate-specific adapter of an E3 ubiquitin-protein ligase complex which mediates the ubiquitination and subsequent proteasomal degradation of target proteins. This Mus musculus (Mouse) protein is Kelch-like protein 36 (Klhl36).